Here is a 453-residue protein sequence, read N- to C-terminus: Gamma-aminobutyric acid receptor subunit alpha-6 (453 aa).

The N-terminal stretch at 1–19 is a signal peptide; that stretch reads MASSLPWLCIILWLENALG. Residues 20–243 lie on the Extracellular side of the membrane; the sequence is KLEVEGNFYS…FHLQRKMGYF (224 aa). The N-linked (GlcNAc...) asparagine glycan is linked to N31. R84 is a 4-aminobutanoate binding site. N-linked (GlcNAc...) asparagine glycans are attached at residues N128 and N141. T147 is a 4-aminobutanoate binding site. C156 and C170 are disulfide-bonded. The helical transmembrane segment at 244-264 threads the bilayer; the sequence is MIQIYTPCIMTVILSQVSFWI. The Cytoplasmic segment spans residues 265–270; that stretch reads NKESVP. A helical transmembrane segment spans residues 271–290; sequence ARTVFGITTVLTMTTLSISA. The Extracellular segment spans residues 291-304; it reads RHSLPKVSYATAMD. Residues 305–325 traverse the membrane as a helical segment; sequence WFIAVCFAFVFSALIEFAAVN. The Cytoplasmic segment spans residues 326-422; that stretch reads YFTNLQTQKA…GTSKIDQYSR (97 aa). T403 bears the Phosphothreonine mark. A helical membrane pass occupies residues 423–443; the sequence is ILFPVAFAGFNLVYWVVYLSK. At 444 to 453 the chain is on the extracellular side; that stretch reads DTMEVSSSVE.

The protein belongs to the ligand-gated ion channel (TC 1.A.9) family. Gamma-aminobutyric acid receptor (TC 1.A.9.5) subfamily. GABRA6 sub-subfamily. As to quaternary structure, heteropentamer, formed by a combination of alpha (GABRA1-6), beta (GABRB1-3), gamma (GABRG1-3), delta (GABRD), epsilon (GABRE), rho (GABRR1-3), pi (GABRP) and theta (GABRQ) chains, each subunit exhibiting distinct physiological and pharmacological properties. Binds UBQLN1. In terms of tissue distribution, expressed in brain, in cerebellar granule cells.

It localises to the postsynaptic cell membrane. Its subcellular location is the cell membrane. The enzyme catalyses chloride(in) = chloride(out). Functionally, alpha subunit of the heteropentameric ligand-gated chloride channel gated by gamma-aminobutyric acid (GABA), a major inhibitory neurotransmitter in the brain. GABA-gated chloride channels, also named GABA(A) receptors (GABAAR), consist of five subunits arranged around a central pore and contain GABA active binding site(s) located at the alpha and beta subunit interface(s). When activated by GABA, GABAARs selectively allow the flow of chloride anions across the cell membrane down their electrochemical gradient. Alpha-6/GABRA6 subunits are found at both synaptic and extrasynaptic sites. Chloride influx into the postsynaptic neuron following GABAAR opening decreases the neuron ability to generate a new action potential, thereby reducing nerve transmission. Extrasynaptic alpha-6-containing receptors contribute to the tonic GABAergic inhibition. Alpha-6 subunits are also present on glutamatergic synapses. This Homo sapiens (Human) protein is Gamma-aminobutyric acid receptor subunit alpha-6.